We begin with the raw amino-acid sequence, 496 residues long: Glutamyl-tRNA(Gln) amidotransferase subunit A (496 aa).

Residues K75 and S150 each act as charge relay system in the active site. S174 acts as the Acyl-ester intermediate in catalysis.

This sequence belongs to the amidase family. GatA subfamily. In terms of assembly, heterotrimer of A, B and C subunits.

It carries out the reaction L-glutamyl-tRNA(Gln) + L-glutamine + ATP + H2O = L-glutaminyl-tRNA(Gln) + L-glutamate + ADP + phosphate + H(+). Allows the formation of correctly charged Gln-tRNA(Gln) through the transamidation of misacylated Glu-tRNA(Gln) in organisms which lack glutaminyl-tRNA synthetase. The reaction takes place in the presence of glutamine and ATP through an activated gamma-phospho-Glu-tRNA(Gln). The sequence is that of Glutamyl-tRNA(Gln) amidotransferase subunit A from Burkholderia pseudomallei (strain 1106a).